Here is a 152-residue protein sequence, read N- to C-terminus: Ribosome maturation factor RimP (152 aa).

It belongs to the RimP family.

Its subcellular location is the cytoplasm. Its function is as follows. Required for maturation of 30S ribosomal subunits. This is Ribosome maturation factor RimP from Escherichia coli (strain K12 / MC4100 / BW2952).